The sequence spans 265 residues: Dehydrin COR47 (265 aa).

The segment covering 1–14 has biased composition (basic and acidic residues); sequence MAEEYKNNVPEHET. Residues 1 to 265 are disordered; it reads MAEEYKNNVP…EVKKEKESDD (265 aa). Position 2 is an N-acetylalanine (Ala2). A compositionally biased stretch (polar residues) spans 16–28; it reads TVATEESPATTTE. Residues 29-47 show a composition bias toward basic and acidic residues; the sequence is VTDRGLFDFLGKKEEEVKP. Residue Ser64 is modified to Phosphoserine. A compositionally biased stretch (basic and acidic residues) spans 69–79; that stretch reads AAEHEEVKENK. Phosphothreonine is present on Thr90. Basic and acidic residues-rich tracts occupy residues 96–105 and 129–156; these read NKPSVIEKLH and IVEG…KTAE. Repeat unit 1 spans residues 133–153; that stretch reads EEDKKGLVEKIKEKLPGHHDK. The tract at residues 133 to 251 is 3 X 21 AA repeats, Lys-rich; sequence EEDKKGLVEK…KEKLPGYHAK (119 aa). Positions 160-172 are enriched in low complexity; the sequence is PVSTTIPVPVSES. Basic and acidic residues-rich tracts occupy residues 173–204 and 227–265; these read VVEH…KAED and PVEH…ESDD. 2 consecutive repeat copies span residues 180 to 200 and 231 to 251.

Belongs to the plant dehydrin family.

The protein is Dehydrin COR47 (COR47) of Arabidopsis thaliana (Mouse-ear cress).